A 277-amino-acid chain; its full sequence is Large ribosomal subunit protein uL2 (277 aa).

2 disordered regions span residues 37–58 (LHSK…GGGH) and 222–277 (GVAM…NRRR). Basic residues predominate over residues 268–277 (VRRRKQNRRR).

The protein belongs to the universal ribosomal protein uL2 family. In terms of assembly, part of the 50S ribosomal subunit. Forms a bridge to the 30S subunit in the 70S ribosome.

In terms of biological role, one of the primary rRNA binding proteins. Required for association of the 30S and 50S subunits to form the 70S ribosome, for tRNA binding and peptide bond formation. It has been suggested to have peptidyltransferase activity; this is somewhat controversial. Makes several contacts with the 16S rRNA in the 70S ribosome. This Parafrankia sp. (strain EAN1pec) protein is Large ribosomal subunit protein uL2.